Reading from the N-terminus, the 381-residue chain is NF-kappa-B inhibitor-like protein 1 (381 aa).

The segment at 1–34 (MSNPSPQVPEEEASTSVCRPKSSMASTSRRQRRE) is disordered. ANK repeat units lie at residues 64–93 (GQPPPLHRACARHDAPALCLLLRLGADPAH) and 97–130 (HGDTALHAAARQGPDAYTDFFLPLLSRCPSAMGI). Disordered stretches follow at residues 129 to 167 (GIKNKDGETPGQILGWGPPWDSAEEEEEDDASKEREWRQ) and 186 to 294 (GDAS…RGSL). Position 150 is a phosphoserine (serine 150). The span at 150–159 (SAEEEEEDDA) shows a compositional bias: acidic residues. Composition is skewed to basic and acidic residues over residues 218–228 (REAEGSRRPPR) and 238–287 (QQEE…EHPR).

Interacts with CACTIN (via N-terminal domain); the interaction occurs in a proinflammatory-independent manner. Detected in different cell types including monocytes, T-cells, B-cells and hepatocytes.

Its subcellular location is the nucleus. Involved in the regulation of innate immune response. Acts as negative regulator of Toll-like receptor and interferon-regulatory factor (IRF) signaling pathways. Contributes to the negative regulation of transcriptional activation of NF-kappa-B target genes in response to endogenous proinflammatory stimuli. In Homo sapiens (Human), this protein is NF-kappa-B inhibitor-like protein 1 (NFKBIL1).